Reading from the N-terminus, the 76-residue chain is Acyl carrier protein (76 aa).

Positions 1–74 constitute a Carrier domain; it reads MEERIKEIIA…DVINYIKEKK (74 aa). Serine 34 bears the O-(pantetheine 4'-phosphoryl)serine mark.

This sequence belongs to the acyl carrier protein (ACP) family. 4'-phosphopantetheine is transferred from CoA to a specific serine of apo-ACP by AcpS. This modification is essential for activity because fatty acids are bound in thioester linkage to the sulfhydryl of the prosthetic group.

It is found in the cytoplasm. It participates in lipid metabolism; fatty acid biosynthesis. Carrier of the growing fatty acid chain in fatty acid biosynthesis. This Persephonella marina (strain DSM 14350 / EX-H1) protein is Acyl carrier protein.